We begin with the raw amino-acid sequence, 430 residues long: Serine--tRNA ligase (430 aa).

237-239 (TAE) contributes to the L-serine binding site. 268-270 (RSE) provides a ligand contact to ATP. Glu-291 lines the L-serine pocket. 355-358 (EISS) is a binding site for ATP. Residue Ser-391 participates in L-serine binding.

It belongs to the class-II aminoacyl-tRNA synthetase family. Type-1 seryl-tRNA synthetase subfamily. As to quaternary structure, homodimer. The tRNA molecule binds across the dimer.

It localises to the cytoplasm. It catalyses the reaction tRNA(Ser) + L-serine + ATP = L-seryl-tRNA(Ser) + AMP + diphosphate + H(+). It carries out the reaction tRNA(Sec) + L-serine + ATP = L-seryl-tRNA(Sec) + AMP + diphosphate + H(+). Its pathway is aminoacyl-tRNA biosynthesis; selenocysteinyl-tRNA(Sec) biosynthesis; L-seryl-tRNA(Sec) from L-serine and tRNA(Sec): step 1/1. In terms of biological role, catalyzes the attachment of serine to tRNA(Ser). Is also able to aminoacylate tRNA(Sec) with serine, to form the misacylated tRNA L-seryl-tRNA(Sec), which will be further converted into selenocysteinyl-tRNA(Sec). This chain is Serine--tRNA ligase, found in Salmonella enteritidis PT4 (strain P125109).